The primary structure comprises 180 residues: uncharacterized protein (180 aa).

Residues 3–33 (QQQSNNSNDNKEQLDRVIESLNRVNSETKQI) are a coiled coil.

This is an uncharacterized protein from Acanthamoeba polyphaga (Amoeba).